We begin with the raw amino-acid sequence, 764 residues long: Elongation factor G, mitochondrial (764 aa).

The transit peptide at 1 to 23 (MIRSLRAVSRLGARGFSSFAAAR) directs the protein to the mitochondrion. The region spanning 56 to 337 (ARMRNIGISA…AICEYLPDPS (282 aa)) is the tr-type G domain. GTP contacts are provided by residues 65–72 (AHIDSGKT), 136–140 (DTPGH), and 190–193 (NKMD).

Belongs to the TRAFAC class translation factor GTPase superfamily. Classic translation factor GTPase family. EF-G/EF-2 subfamily.

The protein resides in the mitochondrion. It participates in protein biosynthesis; polypeptide chain elongation. Mitochondrial GTPase that catalyzes the GTP-dependent ribosomal translocation step during translation elongation. During this step, the ribosome changes from the pre-translocational (PRE) to the post-translocational (POST) state as the newly formed A-site-bound peptidyl-tRNA and P-site-bound deacylated tRNA move to the P and E sites, respectively. Catalyzes the coordinated movement of the two tRNA molecules, the mRNA and conformational changes in the ribosome. The protein is Elongation factor G, mitochondrial of Yarrowia lipolytica (strain CLIB 122 / E 150) (Yeast).